Reading from the N-terminus, the 353-residue chain is Phosphoribosylformylglycinamidine cyclo-ligase (353 aa).

It belongs to the AIR synthase family.

It localises to the cytoplasm. It carries out the reaction 2-formamido-N(1)-(5-O-phospho-beta-D-ribosyl)acetamidine + ATP = 5-amino-1-(5-phospho-beta-D-ribosyl)imidazole + ADP + phosphate + H(+). Its pathway is purine metabolism; IMP biosynthesis via de novo pathway; 5-amino-1-(5-phospho-D-ribosyl)imidazole from N(2)-formyl-N(1)-(5-phospho-D-ribosyl)glycinamide: step 2/2. The chain is Phosphoribosylformylglycinamidine cyclo-ligase from Dinoroseobacter shibae (strain DSM 16493 / NCIMB 14021 / DFL 12).